Consider the following 198-residue polypeptide: Imidazoleglycerol-phosphate dehydratase (198 aa).

It belongs to the imidazoleglycerol-phosphate dehydratase family.

The protein resides in the cytoplasm. The enzyme catalyses D-erythro-1-(imidazol-4-yl)glycerol 3-phosphate = 3-(imidazol-4-yl)-2-oxopropyl phosphate + H2O. The protein operates within amino-acid biosynthesis; L-histidine biosynthesis; L-histidine from 5-phospho-alpha-D-ribose 1-diphosphate: step 6/9. The sequence is that of Imidazoleglycerol-phosphate dehydratase from Magnetococcus marinus (strain ATCC BAA-1437 / JCM 17883 / MC-1).